The chain runs to 102 residues: Small ribosomal subunit protein uS10 (102 aa).

It belongs to the universal ribosomal protein uS10 family. As to quaternary structure, part of the 30S ribosomal subunit.

Involved in the binding of tRNA to the ribosomes. In Rhodospirillum rubrum (strain ATCC 11170 / ATH 1.1.1 / DSM 467 / LMG 4362 / NCIMB 8255 / S1), this protein is Small ribosomal subunit protein uS10.